We begin with the raw amino-acid sequence, 418 residues long: Putative ion-transport protein YfeO (418 aa).

12 helical membrane-spanning segments follow: residues 10 to 30, 54 to 74, 99 to 119, 120 to 140, 149 to 169, 186 to 206, 223 to 243, 258 to 278, 300 to 320, 322 to 342, 343 to 363, and 371 to 391; these read LLLS…LIVV, DSPF…GLVI, ALLG…SLGP, EHPI…RLLP, ILAS…AALI, LFAP…FFHP, ILSG…AVWC, VLVL…GGPV, DYFL…ASGF, GGRI…LHEH, VPAV…VLVV, and LFMA…CIVM.

Belongs to the chloride channel (TC 2.A.49) family.

The protein localises to the cell membrane. The chain is Putative ion-transport protein YfeO from Escherichia coli O17:K52:H18 (strain UMN026 / ExPEC).